The chain runs to 60 residues: Ferredoxin (60 aa).

4Fe-4S ferredoxin-type domains are found at residues 2 to 29 (KVRVDADACIGCGVCENLCPDVFQLGDD) and 30 to 60 (GKAKVLQPETDLPCAKDAADSCPTGAISVEE). The [4Fe-4S] cluster site is built by Cys-10, Cys-13, and Cys-16. Residues Cys-20 and Cys-43 are joined by a disulfide bond. Cys-51 lines the [4Fe-4S] cluster pocket.

As to quaternary structure, monomer. Requires [4Fe-4S] cluster as cofactor.

In terms of biological role, ferredoxins are iron-sulfur proteins that transfer electrons in a wide variety of metabolic reactions. This chain is Ferredoxin (fdx), found in Thermotoga maritima (strain ATCC 43589 / DSM 3109 / JCM 10099 / NBRC 100826 / MSB8).